We begin with the raw amino-acid sequence, 275 residues long: Gamma carbonic anhydrase 1, mitochondrial (275 aa).

Residues 1 to 43 (MGTLGRAFYSVGFWIRETGQALDRLGCRLQGKNYFREQLSRHR) constitute a mitochondrion transit peptide. Residues 86–88 (RGD) and 101–102 (QD) each bind substrate. Zn(2+) is bound by residues H107, H130, and H135. N209 is a substrate binding site. The disordered stretch occupies residues 256-275 (LNLPNNILPDKETKRPSNVN). Positions 264-275 (PDKETKRPSNVN) are enriched in basic and acidic residues.

Belongs to the gamma-class carbonic anhydrase family. Homotrimer. Component of the mitochondrial oxidoreductase respiratory chain complex I; element of the extra matrix-exposed domain, which is attached to the membrane arm of this complex. Zn(2+) is required as a cofactor.

It is found in the mitochondrion membrane. In terms of biological role, enzyme involved in the catabolism of H(2)CO(3) but that does not mediates the reversible hydration of carbon dioxide. Mediates complex I assembly in mitochondria and respiration. The sequence is that of Gamma carbonic anhydrase 1, mitochondrial (GAMMACA1) from Arabidopsis thaliana (Mouse-ear cress).